The following is a 530-amino-acid chain: Growth-regulating factor 1 (530 aa).

Residues 1–41 form a disordered region; that stretch reads MDLGVRVSGHETVSSPGQTELGSGFSNKQERSGFDGEDCWR. Over residues 11–27 the composition is skewed to polar residues; the sequence is ETVSSPGQTELGSGFSN. Positions 28-41 are enriched in basic and acidic residues; it reads KQERSGFDGEDCWR. The 36-residue stretch at 133 to 168 folds into the QLQ domain; that stretch reads PFSLTQWAELEQQALIYKYITANVPVPSSLLLSLKK. In terms of domain architecture, WRC spans 196–240; it reads DPEPGRCRRTDGKKWRCSRDAVPDQKYCERHINRGRHRSRKPVEG. 2 short sequence motifs (bipartite nuclear localization signal) span residues 201–211 and 229–236; these read RCRRTDGKKWR and RGRHRSRK. 2 disordered regions span residues 223–250 and 485–530; these read CERH…NAAA and STFG…APSL. Positions 485–508 are enriched in low complexity; the sequence is STFGSLSNSSSASSTIIGDNNNKN. A compositionally biased stretch (polar residues) spans 519–530; sequence TLMNTSATAPSL.

It belongs to the GRF family. As to quaternary structure, interacts with GIF1 and GIF2. Strongly expressed in actively growing and developing tissues, such as roots, upper stems, and shoot tips containing the shoot apical meristem (SAM) and flower buds. Also expressed in mature flowers, but weakly expressed in mature stems and leaves.

Its subcellular location is the nucleus. Its function is as follows. Transcription activator that plays a role in the regulation of cell expansion in leaf and cotyledons tissues. Component of a network formed by miR396, the GRFs and their interacting factors (GIFs) acting in the regulation of meristem function, at least partially through the control of cell proliferation. microRNA396-GRF1/GRF3 regulatory module acts as a developmental regulator in the reprogramming of root cells during cyst nematode infection, leading to the formation of the syncytium. The sequence is that of Growth-regulating factor 1 (GRF1) from Arabidopsis thaliana (Mouse-ear cress).